The chain runs to 314 residues: Ribosomal RNA small subunit methyltransferase H (314 aa).

S-adenosyl-L-methionine is bound by residues 37–39, aspartate 56, phenylalanine 86, aspartate 108, and histidine 115; that span reads GGH.

Belongs to the methyltransferase superfamily. RsmH family.

It is found in the cytoplasm. It carries out the reaction cytidine(1402) in 16S rRNA + S-adenosyl-L-methionine = N(4)-methylcytidine(1402) in 16S rRNA + S-adenosyl-L-homocysteine + H(+). In terms of biological role, specifically methylates the N4 position of cytidine in position 1402 (C1402) of 16S rRNA. This Leptospira biflexa serovar Patoc (strain Patoc 1 / ATCC 23582 / Paris) protein is Ribosomal RNA small subunit methyltransferase H.